The primary structure comprises 89 residues: MQLQASLSFLLILTLCLELRSELARDTIKDLLPNVCAFPMEKGPCQTYMTRWFFNFETGECELFAYGGCGGNSNNFLRKEKCEKFCKFT.

The signal sequence occupies residues 1–24 (MQLQASLSFLLILTLCLELRSELA). The BPTI/Kunitz inhibitor domain occupies 36-86 (CAFPMEKGPCQTYMTRWFFNFETGECELFAYGGCGGNSNNFLRKEKCEKFC). Cystine bridges form between Cys36–Cys86, Cys45–Cys69, and Cys61–Cys82.

It is found in the secreted. The protein is Kunitz-type protease inhibitor 3 (SPINT3) of Homo sapiens (Human).